A 256-amino-acid chain; its full sequence is Protein FixA (256 aa).

The protein belongs to the ETF beta-subunit/FixA family. In terms of assembly, heterodimer of FixA and FixB.

It participates in amine and polyamine metabolism; carnitine metabolism. In terms of biological role, required for anaerobic carnitine reduction. May bring reductant to CaiA. The sequence is that of Protein FixA from Salmonella paratyphi B (strain ATCC BAA-1250 / SPB7).